The chain runs to 183 residues: Acireductone dioxygenase (183 aa).

The Fe(2+) site is built by H99, H101, E105, and H144. H99, H101, E105, and H144 together coordinate Ni(2+).

Belongs to the acireductone dioxygenase (ARD) family. Monomer. It depends on Fe(2+) as a cofactor. Ni(2+) serves as cofactor.

It carries out the reaction 1,2-dihydroxy-5-(methylsulfanyl)pent-1-en-3-one + O2 = 3-(methylsulfanyl)propanoate + CO + formate + 2 H(+). The catalysed reaction is 1,2-dihydroxy-5-(methylsulfanyl)pent-1-en-3-one + O2 = 4-methylsulfanyl-2-oxobutanoate + formate + 2 H(+). The protein operates within amino-acid biosynthesis; L-methionine biosynthesis via salvage pathway; L-methionine from S-methyl-5-thio-alpha-D-ribose 1-phosphate: step 5/6. In terms of biological role, catalyzes 2 different reactions between oxygen and the acireductone 1,2-dihydroxy-3-keto-5-methylthiopentene (DHK-MTPene) depending upon the metal bound in the active site. Fe-containing acireductone dioxygenase (Fe-ARD) produces formate and 2-keto-4-methylthiobutyrate (KMTB), the alpha-ketoacid precursor of methionine in the methionine recycle pathway. Ni-containing acireductone dioxygenase (Ni-ARD) produces methylthiopropionate, carbon monoxide and formate, and does not lie on the methionine recycle pathway. The protein is Acireductone dioxygenase of Microcystis aeruginosa.